A 266-amino-acid polypeptide reads, in one-letter code: 26 kDa endochitinase 2 (266 aa).

An N-terminal signal peptide occupies residues 1–23 (MRSLAVVVAVVATVAMAIGTARG). Cystine bridges form between Cys46/Cys108, Cys120/Cys128, and Cys227/Cys259. Catalysis depends on Glu90, which acts as the Proton donor.

This sequence belongs to the glycosyl hydrolase 19 family. Chitinase class II subfamily.

It carries out the reaction Random endo-hydrolysis of N-acetyl-beta-D-glucosaminide (1-&gt;4)-beta-linkages in chitin and chitodextrins.. Functionally, defense against chitin-containing fungal pathogens. This chain is 26 kDa endochitinase 2, found in Hordeum vulgare (Barley).